We begin with the raw amino-acid sequence, 329 residues long: Neuropeptides B/W receptor type 1 (329 aa).

Topologically, residues 1 to 43 (MHNLTLFESGGDNVSCGGSSLGCPNGSSLAPLPLPQPLAVAVP) are extracellular. N-linked (GlcNAc...) asparagine glycosylation is found at Asn3, Asn13, and Asn25. The helical transmembrane segment at 44-64 (VVYGVICAVGLAGNSAVLYVL) threads the bilayer. The Cytoplasmic portion of the chain corresponds to 65-75 (LRTPRMKTVTN). Residues 76-96 (VFILNLAIADELFTLVLPINI) form a helical membrane-spanning segment. The Extracellular segment spans residues 97–112 (ADFLLRRWPFGEVMCK). The cysteines at positions 111 and 190 are disulfide-linked. The chain crosses the membrane as a helical span at residues 113–133 (LIVAVDQYNTFSSLYFLAVMS). Over 134 to 158 (ADRYLVVLATAESRRVSGRTYGAAR) the chain is Cytoplasmic. The helical transmembrane segment at 159–179 (AVSLAVWALVTLVVLPFAVFA) threads the bilayer. The Extracellular portion of the chain corresponds to 180 to 209 (RLDEEQGRRQCVLVFPQPEAFWWRASRLYT). The chain crosses the membrane as a helical span at residues 210 to 230 (LVLGFAIPVTTICALYTTLLC). Residues 231 to 250 (RLRAIQLDSHAKALDRAKKR) are Cytoplasmic-facing. A helical membrane pass occupies residues 251 to 271 (VTLLVAAILAVCLLCWTPYHL). Residues 272 to 289 (STIVALTTDLPQTPLVIG) lie on the Extracellular side of the membrane. Residues 290–312 (ISYFITSLSYANSCLNPFLYAFL) form a helical membrane-spanning segment. Residues 313-329 (DDSFRRSLRQLVSCRSA) lie on the Cytoplasmic side of the membrane.

Belongs to the G-protein coupled receptor 1 family.

It localises to the cell membrane. Interacts specifically with a number of opioid ligands. Receptor for neuropeptides B and W, which may be involved in neuroendocrine system regulation, food intake and the organization of other signals. The polypeptide is Neuropeptides B/W receptor type 1 (Npbwr1) (Mus musculus (Mouse)).